We begin with the raw amino-acid sequence, 215 residues long: HTH-type transcriptional regulator AcrR (215 aa).

In terms of domain architecture, HTH tetR-type spans 10–70; the sequence is QETRQHILDV…EIWELSESNI (61 aa). Residues 33-52 constitute a DNA-binding region (H-T-H motif); it reads SLGEIAKAAGVTRGAIYWHF.

Its function is as follows. Potential regulator protein for the acrAB genes. The chain is HTH-type transcriptional regulator AcrR (acrR) from Shigella flexneri.